Consider the following 642-residue polypeptide: Palmitoyltransferase akr1 (642 aa).

ANK repeat units lie at residues 1-29, 33-62, 67-96, 100-129, 133-162, and 166-196; these read MGSLFLAASQGELDTVKNLISSEKIDVNA, GGATALHWAALNQQIPICKFLLEHGADVNA, LQAAPIHWAAKRGSVKTVHYLVQHGADPLL, QGFNCLHLAVHAASPLLVVYLLHLDISVDL, QQHTPLMWASYHGNEPITNCLLRWGADVLA, and DKMTPLHWSIVGGNLKCMKLILKEGGIPCTA. Over 1 to 256 the chain is Cytoplasmic; the sequence is MGSLFLAASQ…SKFQFSQKTF (256 aa). 2 consecutive transmembrane segments (helical) span residues 257 to 277 and 278 to 298; these read IIFCFLSSFIITGVFFFIMSI and CPMVISLIIAPLWIYFTFKYI. Topologically, residues 299-316 are cytoplasmic; it reads TTCIHANIDIVHFYLETP. A helical membrane pass occupies residues 317 to 337; the sequence is FLAGIFSSIFFWVWCHSLLYI. Residues 338–343 are Lumenal-facing; sequence VPKTLP. A helical membrane pass occupies residues 344 to 364; sequence IKPLSSLLFVLISFTCIGLYV. Over 365-444 the chain is Cytoplasmic; it reads RTAFQNPGYV…NCVGARNHRT (80 aa). The region spanning 400-450 is the DHHC domain; it reads HYCLKCFQVKPPRSYHCGACKRCINRYDHHCPWTGNCVGARNHRTFLLFVF. C430 functions as the S-palmitoyl cysteine intermediate in the catalytic mechanism. The helical transmembrane segment at 445-465 threads the bilayer; that stretch reads FLLFVFTLSTLIPIYFYVAFY. Residues 466–496 are Lumenal-facing; that stretch reads YLQNIPIQKKYESYRCLFISGTICQWSLKDM. The chain crosses the membrane as a helical span at residues 497-517; it reads FVLVASLTLFVNWCWVVVLAF. Residues 518-642 are Cytoplasmic-facing; sequence TQICQVAHNV…GRQDEATRHV (125 aa).

The protein belongs to the DHHC palmitoyltransferase family. AKR/ZDHHC17 subfamily.

The protein resides in the early endosome membrane. The protein localises to the golgi apparatus membrane. It catalyses the reaction L-cysteinyl-[protein] + hexadecanoyl-CoA = S-hexadecanoyl-L-cysteinyl-[protein] + CoA. Its function is as follows. Palmitoyltransferase specific for casein kinase 1. The protein is Palmitoyltransferase akr1 (akr1) of Schizosaccharomyces pombe (strain 972 / ATCC 24843) (Fission yeast).